A 131-amino-acid chain; its full sequence is Small ribosomal subunit protein bS6 (131 aa).

The disordered stretch occupies residues 98–131; sequence EASPMVKAKDERRERRDDFANETADDAEAGDSEE. Positions 104–116 are enriched in basic and acidic residues; the sequence is KAKDERRERRDDF. The span at 120-131 shows a compositional bias: acidic residues; the sequence is TADDAEAGDSEE.

The protein belongs to the bacterial ribosomal protein bS6 family.

Binds together with bS18 to 16S ribosomal RNA. In Salmonella dublin (strain CT_02021853), this protein is Small ribosomal subunit protein bS6.